Here is a 31-residue protein sequence, read N- to C-terminus: Cytochrome b6-f complex subunit 6 (31 aa).

Residues 4 to 24 (ITSYFGFLLAALTITSALFIG) traverse the membrane as a helical segment.

The protein belongs to the PetL family. In terms of assembly, the 4 large subunits of the cytochrome b6-f complex are cytochrome b6, subunit IV (17 kDa polypeptide, PetD), cytochrome f and the Rieske protein, while the 4 small subunits are PetG, PetL, PetM and PetN. The complex functions as a dimer.

The protein resides in the plastid. It is found in the chloroplast thylakoid membrane. Its function is as follows. Component of the cytochrome b6-f complex, which mediates electron transfer between photosystem II (PSII) and photosystem I (PSI), cyclic electron flow around PSI, and state transitions. PetL is important for photoautotrophic growth as well as for electron transfer efficiency and stability of the cytochrome b6-f complex. This chain is Cytochrome b6-f complex subunit 6, found in Hamamelis virginiana (Witch-hazel).